The chain runs to 550 residues: Envelope glycoprotein E (550 aa).

The N-terminal stretch at 1–20 is a signal peptide; sequence MDRGAVVGFLLGVCVVSCLA. Over 21 to 419 the chain is Virion surface; sequence GTPKTSWRRV…HAPPTHGALR (399 aa). The segment at 63 to 88 is interaction with gI; that stretch reads CGPLHPSWVSLMPPKQVPETVVDAAC. A glycan (N-linked (GlcNAc...) asparagine; by host) is linked at N124. Positions 162–214 are disordered; the sequence is QPAPVPTPPPTPADYDEDDNDEGEDESLAGTPASGTPRLPPPPAPPRSWPSAP. Over residues 164–173 the composition is skewed to pro residues; sequence APVPTPPPTP. Acidic residues predominate over residues 175 to 188; that stretch reads DYDEDDNDEGEDES. The residue at position 176 (Y176) is a Sulfotyrosine; by host. The segment covering 199–209 has biased composition (pro residues); that stretch reads RLPPPPAPPRS. Residues 235 to 380 form a fc-binding region; it reads SPGETFSTNV…GHITISTAAQ (146 aa). N-linked (GlcNAc...) asparagine; by host glycosylation is present at N243. Intrachain disulfides connect C271-C297, C280-C289, and C314-C323. The segment at 394-413 is disordered; it reads GADLAEPTHPHVGAPPHAPP. A compositionally biased stretch (low complexity) spans 403–413; sequence PHVGAPPHAPP. A helical transmembrane segment spans residues 420-440; that stretch reads LGAVMGAALLLSALGLSVWAC. Over 441 to 550 the chain is Intravirion; it reads MTCWRRRAWR…SQASDSSVFW (110 aa). Short sequence motifs (internalization motif) lie at residues 463-466 and 472-475; these read YIRV and YADW. Residues 470 to 495 are interaction with VP22 and UL11; it reads ELYADWSSDSEGERDQVPWLAPPERP. Phosphoserine; by host CK2 is present on residues S476 and S477. Positions 476–484 are acidic; it reads SSDSEGERD. The segment at 476–550 is disordered; that stretch reads SSDSEGERDQ…SQASDSSVFW (75 aa). S503 bears the Phosphoserine mark. Residues 541 to 550 show a composition bias toward polar residues; the sequence is SQASDSSVFW.

It belongs to the alphaherpesvirinae glycoprotein E family. In terms of assembly, interacts with gI; this interaction enhances the Fc receptor function of gE. The heterodimer gE/gI interacts with the Fc part of host IgG. Interacts (via C-terminus) with VP22 tegument protein; this interaction is necessary for the recruitment of VP22 to the Golgi and its packaging into virions. Interacts (via C-terminus) with UL11 tegument protein. Post-translationally, phosphorylated on serines within the acidic cluster. Phosphorylation determines whether endocytosed viral gE traffics to the trans-Golgi network or recycles to the cell membrane. In terms of processing, N-glycosylated, and sulfated.

It localises to the virion membrane. It is found in the host cell membrane. Its subcellular location is the host cell junction. The protein localises to the host Golgi apparatus membrane. The protein resides in the host endosome membrane. Functionally, in epithelial cells, the heterodimer gE/gI is required for the cell-to-cell spread of the virus, by sorting nascent virions to cell junctions. Once the virus reaches the cell junctions, virus particles can spread to adjacent cells extremely rapidly through interactions with cellular receptors that accumulate at these junctions. Implicated in basolateral spread in polarized cells. In neuronal cells, gE/gI is essential for the anterograde spread of the infection throughout the host nervous system. Together with US9, the heterodimer gE/gI is involved in the sorting and transport of viral structural components toward axon tips. The heterodimer gE/gI serves as a receptor for the Fc part of host IgG. Dissociation of gE/gI from IgG occurs at acidic pH. May thus be involved in anti-HSV antibodies bipolar bridging, followed by intracellular endocytosis and degradation, thereby interfering with host IgG-mediated immune responses. The chain is Envelope glycoprotein E (gE) from Human herpesvirus 1 (strain 17) (HHV-1).